Here is a 408-residue protein sequence, read N- to C-terminus: Argininosuccinate synthase (408 aa).

Residues 10 to 18 (AYSGGLDTS) and alanine 37 contribute to the ATP site. Positions 90 and 95 each coordinate L-citrulline. Glycine 120 provides a ligand contact to ATP. The L-aspartate site is built by threonine 122, asparagine 126, and aspartate 127. Position 126 (asparagine 126) interacts with L-citrulline. L-citrulline contacts are provided by arginine 130, serine 182, serine 191, glutamate 267, and tyrosine 279.

The protein belongs to the argininosuccinate synthase family. Type 1 subfamily. In terms of assembly, homotetramer.

The protein resides in the cytoplasm. It catalyses the reaction L-citrulline + L-aspartate + ATP = 2-(N(omega)-L-arginino)succinate + AMP + diphosphate + H(+). Its pathway is amino-acid biosynthesis; L-arginine biosynthesis; L-arginine from L-ornithine and carbamoyl phosphate: step 2/3. The protein is Argininosuccinate synthase of Paraburkholderia xenovorans (strain LB400).